A 356-amino-acid chain; its full sequence is Dual-specificity RNA methyltransferase RlmN (356 aa).

The active-site Proton acceptor is the glutamate 89. One can recognise a Radical SAM core domain in the interval 108–341; the sequence is KHARYTICVS…CTIRESKGLD (234 aa). A disulfide bridge connects residues cysteine 115 and cysteine 346. Residues cysteine 122, cysteine 126, and cysteine 129 each coordinate [4Fe-4S] cluster. S-adenosyl-L-methionine is bound by residues 172–173, serine 204, 227–229, and asparagine 303; these read GE and SLH. Cysteine 346 acts as the S-methylcysteine intermediate in catalysis.

It belongs to the radical SAM superfamily. RlmN family. Requires [4Fe-4S] cluster as cofactor.

Its subcellular location is the cytoplasm. The catalysed reaction is adenosine(2503) in 23S rRNA + 2 reduced [2Fe-2S]-[ferredoxin] + 2 S-adenosyl-L-methionine = 2-methyladenosine(2503) in 23S rRNA + 5'-deoxyadenosine + L-methionine + 2 oxidized [2Fe-2S]-[ferredoxin] + S-adenosyl-L-homocysteine. It carries out the reaction adenosine(37) in tRNA + 2 reduced [2Fe-2S]-[ferredoxin] + 2 S-adenosyl-L-methionine = 2-methyladenosine(37) in tRNA + 5'-deoxyadenosine + L-methionine + 2 oxidized [2Fe-2S]-[ferredoxin] + S-adenosyl-L-homocysteine. In terms of biological role, specifically methylates position 2 of adenine 2503 in 23S rRNA and position 2 of adenine 37 in tRNAs. m2A2503 modification seems to play a crucial role in the proofreading step occurring at the peptidyl transferase center and thus would serve to optimize ribosomal fidelity. This is Dual-specificity RNA methyltransferase RlmN from Campylobacter lari (strain RM2100 / D67 / ATCC BAA-1060).